A 216-amino-acid polypeptide reads, in one-letter code: FMN-dependent NADH:quinone oxidoreductase 2 (216 aa).

FMN contacts are provided by residues Ser-9, 15 to 17, 96 to 99, and 140 to 143; these read SVS, MYNF, and SRGG.

The protein belongs to the azoreductase type 1 family. Homodimer. It depends on FMN as a cofactor.

The catalysed reaction is 2 a quinone + NADH + H(+) = 2 a 1,4-benzosemiquinone + NAD(+). The enzyme catalyses N,N-dimethyl-1,4-phenylenediamine + anthranilate + 2 NAD(+) = 2-(4-dimethylaminophenyl)diazenylbenzoate + 2 NADH + 2 H(+). In terms of biological role, quinone reductase that provides resistance to thiol-specific stress caused by electrophilic quinones. Also exhibits azoreductase activity. Catalyzes the reductive cleavage of the azo bond in aromatic azo compounds to the corresponding amines. This chain is FMN-dependent NADH:quinone oxidoreductase 2, found in Xanthomonas euvesicatoria pv. vesicatoria (strain 85-10) (Xanthomonas campestris pv. vesicatoria).